Consider the following 287-residue polypeptide: Protease HtpX (287 aa).

A run of 2 helical transmembrane segments spans residues 4–24 (VLLF…VFNI) and 37–57 (VGLL…SLWI). Residue His143 participates in Zn(2+) binding. Glu144 is an active-site residue. A Zn(2+)-binding site is contributed by His147. 2 helical membrane passes run 158–178 (LIQG…ASAI) and 194–214 (GVVM…VMWF). Glu219 lines the Zn(2+) pocket.

The protein belongs to the peptidase M48B family. Requires Zn(2+) as cofactor.

It localises to the cell inner membrane. The chain is Protease HtpX from Idiomarina loihiensis (strain ATCC BAA-735 / DSM 15497 / L2-TR).